A 225-amino-acid polypeptide reads, in one-letter code: Small ribosomal subunit protein uS3 (225 aa).

Positions 38-106 (IRRFLQKKFK…PIGMNIIEVK (69 aa)) constitute a KH type-2 domain.

Belongs to the universal ribosomal protein uS3 family. In terms of assembly, part of the 30S ribosomal subunit. Forms a tight complex with proteins S10 and S14.

Binds the lower part of the 30S subunit head. Binds mRNA in the 70S ribosome, positioning it for translation. This chain is Small ribosomal subunit protein uS3, found in Leptospira biflexa serovar Patoc (strain Patoc 1 / Ames).